The chain runs to 391 residues: Histamine H4 receptor (391 aa).

The Extracellular segment spans residues 1–19 (MSESNSTGILPPAAQVPLA). N-linked (GlcNAc...) asparagine glycosylation occurs at N5. Residues 20 to 40 (FLMSSFAFAIMVGNAVVILAF) traverse the membrane as a helical segment. Topologically, residues 41-52 (VVDRNLRHRSNY) are cytoplasmic. A helical membrane pass occupies residues 53 to 73 (FFLNLAISDFLVGLISIPLYI). The Extracellular portion of the chain corresponds to 74-87 (PHVLFNWNFGSGIC). A disulfide bridge links C87 with C166. A helical transmembrane segment spans residues 88–108 (MFWLITDYLLCTASVYNIVLI). Over 109–131 (SYDRYQSVSNAVSYRAQHTGIMK) the chain is Cytoplasmic. A helical transmembrane segment spans residues 132 to 152 (IVAQMVAVWILAFLVNGPMIL). Residues 153-174 (ASDSWKNSTNTKDCEPGFVTEW) are Extracellular-facing. N159 is a glycosylation site (N-linked (GlcNAc...) asparagine). The chain crosses the membrane as a helical span at residues 175-195 (YILTITMLLEFLLPVISVAYF). Over 196–306 (NVQIYWSLWK…LLRGRKLARS (111 aa)) the chain is Cytoplasmic. Residues 238–258 (TSNPGLKESAASRHSESPRRK) are disordered. Residues 247-256 (AASRHSESPR) are compositionally biased toward basic and acidic residues. A helical transmembrane segment spans residues 307 to 327 (LAILLSAFAICWAPYCLFTIV). At 328 to 343 (LSTYPRTERPKSVWYS) the chain is on the extracellular side. Residues 344 to 364 (IAFWLQWFNSFVNPFLYPLCH) form a helical membrane-spanning segment. Residues 365–391 (RRFQKAFWKILCVTKQPALSQNQSVSS) lie on the Cytoplasmic side of the membrane.

This sequence belongs to the G-protein coupled receptor 1 family. In terms of assembly, interacts with TSPAN4.

Its subcellular location is the cell membrane. The H4 subclass of histamine receptors could mediate the histamine signals in peripheral tissues. Displays a significant level of constitutive activity (spontaneous activity in the absence of agonist). The protein is Histamine H4 receptor (Hrh4) of Mus musculus (Mouse).